A 240-amino-acid polypeptide reads, in one-letter code: Adapter protein MecA (240 aa).

The disordered stretch occupies residues 118–138; it reads EQRAQQQKHSHKSEQKQTKQR.

Belongs to the MecA family. Homodimer.

In terms of biological role, enables the recognition and targeting of unfolded and aggregated proteins to the ClpC protease or to other proteins involved in proteolysis. This chain is Adapter protein MecA, found in Staphylococcus haemolyticus (strain JCSC1435).